Consider the following 1052-residue polypeptide: Mediator of RNA polymerase II transcription subunit 5 (1052 aa).

A disordered region spans residues 949–982; that stretch reads GGDDEQREQHQQQQPDADQSNQGVVAPTGNTPGN. Positions 959-970 are enriched in low complexity; that stretch reads QQQQPDADQSNQ.

This sequence belongs to the Mediator complex subunit 5 family. In terms of assembly, component of the Mediator complex.

The protein localises to the nucleus. In terms of biological role, component of the Mediator complex, a coactivator involved in the regulated transcription of nearly all RNA polymerase II-dependent genes. Mediator functions as a bridge to convey information from gene-specific regulatory proteins to the basal RNA polymerase II transcription machinery. Mediator is recruited to promoters by direct interactions with regulatory proteins and serves as a scaffold for the assembly of a functional preinitiation complex with RNA polymerase II and the general transcription factors. The sequence is that of Mediator of RNA polymerase II transcription subunit 5 (NUT1) from Coccidioides immitis (strain RS) (Valley fever fungus).